Here is a 64-residue protein sequence, read N- to C-terminus: Alpha-conotoxin CnIC (64 aa).

Residues 1 to 21 (MGMRMMFTVFLLVVLTTTVVS) form the signal peptide. The propeptide occupies 22–47 (FPSDSASDVRDDEAKDERSDMYKSKR). Position 48 is a deamidated asparagine; in CnIH; partial (Asn-48). Intrachain disulfides connect Cys-51-Cys-56 and Cys-52-Cys-62. Position 62 is a cysteine amide (Cys-62).

This sequence belongs to the conotoxin A superfamily. In terms of tissue distribution, expressed by the venom duct.

It localises to the secreted. Alpha-conotoxins act on postsynaptic membranes, they bind to the nicotinic acetylcholine receptors (nAChR) and thus inhibit them. This is Alpha-conotoxin CnIC from Conus consors (Singed cone).